The sequence spans 96 residues: Large ribosomal subunit protein bL27 (96 aa).

The propeptide occupies Met-1–Phe-9. The disordered stretch occupies residues Gly-14–Gly-36.

It belongs to the bacterial ribosomal protein bL27 family. The N-terminus is cleaved by ribosomal processing cysteine protease Prp.

The polypeptide is Large ribosomal subunit protein bL27 (Bacillus anthracis (strain A0248)).